We begin with the raw amino-acid sequence, 30 residues long: Bacteriocin plantaricin KL-1Y (30 aa).

The protein resides in the secreted. Its function is as follows. Bacteriocin with activity against species of Lactobacillus, Lactococcus, Pediococcus, Leuconostoc and against B.subtilis and, to a lesser extent, against B.coagulans, B.cereus and species of Enterococcus, Listeria, Kocuria, Staphylococcus, Corynebacterium, Salmonella, Pseudomonas and Escherichia. The chain is Bacteriocin plantaricin KL-1Y from Lactiplantibacillus plantarum (Lactobacillus plantarum).